Consider the following 548-residue polypeptide: CBS domain-containing protein CBSCBSPB4 (548 aa).

Positions 1 to 18 (MANQGGPSRKSLSFSGHS) are enriched in polar residues. The interval 1–58 (MANQGGPSRKSLSFSGHSFQGRKKASENEGGGGGGSDLLPRRSLTSSRSSISLSGERS) is disordered. S18 carries the phosphoserine modification. The segment covering 37–56 (DLLPRRSLTSSRSSISLSGE) has biased composition (low complexity). CBS domains follow at residues 63-126 (VKRL…NLEE), 133-190 (MTKN…ERSV), 233-293 (IIPE…LPQE), and 301-358 (MTPN…AGST). In terms of domain architecture, PB1 spans 411-498 (PNTFAFKLQD…KGLKLHLDYT (88 aa)). A helical membrane pass occupies residues 521 to 543 (AAAYKTVAAGAALAAGLGVLVYL).

The protein localises to the membrane. This chain is CBS domain-containing protein CBSCBSPB4 (CBSCBSPB4), found in Arabidopsis thaliana (Mouse-ear cress).